Here is a 391-residue protein sequence, read N- to C-terminus: Esterase (391 aa).

Residues 1 to 26 (MEFPETNNNPIITLSFLLCMLSLAYA) form the signal peptide. Serine 41 (nucleophile) is an active-site residue. Residues asparagine 186, asparagine 193, and asparagine 313 are each glycosylated (N-linked (GlcNAc...) asparagine). Residues aspartate 347 and histidine 350 contribute to the active site.

This sequence belongs to the 'GDSL' lipolytic enzyme family. In terms of processing, the N-terminus is blocked. Glycosylated.

In terms of biological role, has lipase and esterase activities. May be involved in plant defense. The sequence is that of Esterase from Hevea brasiliensis (Para rubber tree).